Consider the following 302-residue polypeptide: MTRRNMGVHIAGIQLKNPVMTASGTFGSGREYSEFVDLNQLGAVVVKGVANEPWSGNPTPRIAETYGGMLNSVGLQNPGVEAFIKDDIQFLRQYDTKIIVNIAGRTVADYCKVTEKLGDADIDLIELNISCPNVKAGGVNFGTNPAMVEEVTKAVKKVARQPLIVKLTPNVTDIVEIAKAAVAGGADAISLINTLLGMAIDIHGRKPILANVVGGLSGPAIKPVALRMVYQVANAVQVPIIGMGGIATGEDAIAFMLAGATGVAVGTANFMNPRATMEVLEGIEDYMDQYNIEDIHEIIGKL.

Residues Ser-23 and 47–48 (KG) each bind FMN. Residues Lys-47 and 71 to 75 (NSVGL) each bind substrate. FMN contacts are provided by Asn-101 and Asn-128. Asn-128 contributes to the substrate binding site. The Nucleophile role is filled by Cys-131. Residues Lys-166 and Ile-192 each coordinate FMN. Residue 193–194 (NT) participates in substrate binding. FMN-binding positions include Gly-218, 244 to 245 (GG), and 266 to 267 (GT).

The protein belongs to the dihydroorotate dehydrogenase family. Type 1 subfamily. As to quaternary structure, heterotetramer of 2 PyrK and 2 PyrD type B subunits. FMN is required as a cofactor.

The protein localises to the cytoplasm. The enzyme catalyses (S)-dihydroorotate + NAD(+) = orotate + NADH + H(+). It participates in pyrimidine metabolism; UMP biosynthesis via de novo pathway; orotate from (S)-dihydroorotate (NAD(+) route): step 1/1. Catalyzes the conversion of dihydroorotate to orotate with NAD(+) as electron acceptor. The chain is Dihydroorotate dehydrogenase B (NAD(+)), catalytic subunit (pyrD) from Alkaliphilus oremlandii (strain OhILAs) (Clostridium oremlandii (strain OhILAs)).